The chain runs to 579 residues: MGKGTDKLYITHSEWASEDAYSASAGAGVGKARRGGENAGFRRLPFNFCSLSLQPFSHPVCTPSGTIFDLTSILPWIKKHGTNPVDGSPLKSSDLIKLNIAKNESGEYVDPVTYKVLTDNTHIVALRNTGNVFAWDTVERLNIKGKLWRDLVTDEEFSRKDIITLQDPQNIESRNLSTFNYLKEGESALTEQQIREREDPSNNVNFNALGNAAKILKAKEAVAKARAERAQRAESGAASKGLTKPGMSATAASQKTVSHQAGKPIPYNAARHTTGLAAASFTSTGMTPHTSAELALLSDEEYMLKRGRVKQKGYARISTTLGDVNLELHTEYAPKAVWNFIKLAKKGYYKDVTFHRNIKGFMIQGGDPTGTGRGGESIWGKYFNDEFEGPLKHDSRGTLSMANKGKNTNSSQFFIAYRALPHLNNKHTIFGHVIDDPTPSSPTLNNMETHPVNPTTNRPTPDIRIKDVTIFVDPFEEFLKQKQADEAKGTTVTDDTKTSQEIDDDRITWTGKRVRGPGATEAGESSAGGVGKYLKAALANQANQGEDEIVEFVDEGPEPEPAKKKFKGGGGFGDFSSWD.

A U-box domain is found at 42–115; sequence RRLPFNFCSL…GEYVDPVTYK (74 aa). The interval 227–261 is disordered; that stretch reads AERAQRAESGAASKGLTKPGMSATAASQKTVSHQA. Residues 250–259 are compositionally biased toward polar residues; the sequence is TAASQKTVSH. The PPIase cyclophilin-type domain occupies 311–470; that stretch reads QKGYARISTT…PDIRIKDVTI (160 aa). Residues 555 to 579 form a disordered region; that stretch reads EGPEPEPAKKKFKGGGGFGDFSSWD.

The protein belongs to the cyclophilin-type PPIase family. PPIL2 subfamily.

The protein localises to the nucleus. The catalysed reaction is [protein]-peptidylproline (omega=180) = [protein]-peptidylproline (omega=0). The enzyme catalyses S-ubiquitinyl-[E2 ubiquitin-conjugating enzyme]-L-cysteine + [acceptor protein]-L-lysine = [E2 ubiquitin-conjugating enzyme]-L-cysteine + N(6)-ubiquitinyl-[acceptor protein]-L-lysine.. The protein operates within protein modification; protein ubiquitination. In terms of biological role, may catalyze the cis-trans isomerization of proline imidic peptide bonds in oligopeptides thereby assisting the folding of proteins. May also function as a chaperone, playing a role in intracellular transport of proteins. May also have a protein ubiquitin ligase activity acting as an E3 ubiquitin protein ligase or as a ubiquitin-ubiquitin ligase promoting elongation of ubiquitin chains on proteins. The sequence is that of Peptidyl-prolyl cis-trans isomerase-like 2 (cyp8) from Aspergillus fumigatus (strain ATCC MYA-4609 / CBS 101355 / FGSC A1100 / Af293) (Neosartorya fumigata).